Here is a 243-residue protein sequence, read N- to C-terminus: MSRAPLPLAAHERLIFALDVPSHDQAIAWVDRLGDSVSFYKIGMELLASGEYFHVLDALAKRDKRVFVDLKFFDIPATVAGTIRRLAQWPVSYCTVHGWHAGMLQAAAEANHGDMRLLAVTVLTSMGRPDLVAMGIDREPVDVVVERALAARAAGIDGVIASGQEAGPIRRATGPDFSIVCPGIRPGGPVGDDQQRTVGVAQAFIDGADAIVVGRPIRLASDPAAAADAIQAEIRAALMQNGD.

Substrate contacts are provided by residues Asp-19, Lys-41, Asp-69–Thr-78, Thr-124, Arg-185, Gln-194, Gly-214, and Arg-215. The active-site Proton donor is Lys-71.

The protein belongs to the OMP decarboxylase family. Type 1 subfamily. As to quaternary structure, homodimer.

It catalyses the reaction orotidine 5'-phosphate + H(+) = UMP + CO2. Its pathway is pyrimidine metabolism; UMP biosynthesis via de novo pathway; UMP from orotate: step 2/2. In terms of biological role, catalyzes the decarboxylation of orotidine 5'-monophosphate (OMP) to uridine 5'-monophosphate (UMP). This is Orotidine 5'-phosphate decarboxylase from Xanthomonas axonopodis pv. citri (strain 306).